The primary structure comprises 279 residues: Fatty acid metabolism regulator protein (279 aa).

The region spanning 6–74 is the HTH gntR-type domain; that stretch reads KSPAGFAEKY…HGKPTKVNQF (69 aa). A DNA-binding region (H-T-H motif) is located at residues 34-53; sequence ERELSELIGVTRTTLREVLQ.

As to quaternary structure, homodimer.

Its subcellular location is the cytoplasm. Multifunctional regulator of fatty acid metabolism. This chain is Fatty acid metabolism regulator protein, found in Vibrio cholerae serotype O1 (strain ATCC 39541 / Classical Ogawa 395 / O395).